The chain runs to 150 residues: 3-hydroxyacyl-[acyl-carrier-protein] dehydratase FabZ (150 aa).

His51 is a catalytic residue.

Belongs to the thioester dehydratase family. FabZ subfamily.

Its subcellular location is the cytoplasm. The catalysed reaction is a (3R)-hydroxyacyl-[ACP] = a (2E)-enoyl-[ACP] + H2O. In terms of biological role, involved in unsaturated fatty acids biosynthesis. Catalyzes the dehydration of short chain beta-hydroxyacyl-ACPs and long chain saturated and unsaturated beta-hydroxyacyl-ACPs. This is 3-hydroxyacyl-[acyl-carrier-protein] dehydratase FabZ from Rubrobacter xylanophilus (strain DSM 9941 / JCM 11954 / NBRC 16129 / PRD-1).